A 263-amino-acid polypeptide reads, in one-letter code: Receptor-transporting protein 1 (263 aa).

Topologically, residues 1-238 are cytoplasmic; it reads MRIFRPWRLR…QTGSGWNFCS (238 aa). The 3CxxC-type zinc-finger motif lies at 88–197; that stretch reads ASGRFHCSWC…GEFCEACQEG (110 aa). A helical transmembrane segment spans residues 239-259; the sequence is IPWCLFWATVLLLIIYLQFSF. Topologically, residues 260–263 are extracellular; that stretch reads RSSV.

The protein belongs to the TMEM7 family. As to quaternary structure, interacts with olfactory receptors. In terms of tissue distribution, expressed in testis.

The protein resides in the cell membrane. Specifically promotes functional cell surface expression of olfactory receptors, but not of other GPCRs. The protein is Receptor-transporting protein 1 (RTP1) of Homo sapiens (Human).